The sequence spans 689 residues: MTQQTFLVEIGTEELPPKALRSLAQAFADNFRTELDNAGLAHGDIEWFAAPRRLALKVAALNAAQPDREIEKRGPAIAQAFDAEGKPTKAAEGWARGCGISVDQAERLSTDKGEWLLYRALQKGQRAQDLLPALVASALSRLPIPKLMRWGDSDTQFVRPVHTVTLLLGSESIPATILGVPSDRVIRGHRFMGEAEFTLDSADQYPQILLERGKVIADYDARKALIKRDAEAAAARIGGVADLSDSLLEEVTSLVEWPVVLTARFEEKFLAVPAEALVYTMKGDQKYFPVYDAAGKLLPNFIFVANIDSKDAQQIIAGNEKVVRPRLADAEFFFKTDRKQRLEDNLPRLESVLFQQQLGSLRDKTDRITALAGWIAQQIGADVNMATRAGLLSKCDLMTNMVFEFTDTQGVMGMHYARHDGEAEEVAVALNEQYMPRFAGDALPTSLVACAVAIADKMDTLAGIFGIGQHPKGDKDPFALRRAALGVLRIVVEKKLPLDLLTLTQEAVRLYGDKLGNASVVDDVVEFMLGRFRAWYQEEGHAVDTIQAVLARRPTRPADFDARVRAVSHFRTLPEAATLAAANKRVSNILAKSGDVLAEQVQAVLLKEPAEIRLAANLITLQEKLAPLFADGRYQEALVELATLRQPVDDFFEQVMVMADDEQVRINRLTLLNKLRDLFLQVADISVLQ.

This sequence belongs to the class-II aminoacyl-tRNA synthetase family. As to quaternary structure, tetramer of two alpha and two beta subunits.

The protein resides in the cytoplasm. The enzyme catalyses tRNA(Gly) + glycine + ATP = glycyl-tRNA(Gly) + AMP + diphosphate. The protein is Glycine--tRNA ligase beta subunit of Edwardsiella ictaluri (strain 93-146).